Here is a 205-residue protein sequence, read N- to C-terminus: Large ribosomal subunit protein bL25A (205 aa).

Belongs to the bacterial ribosomal protein bL25 family. CTC subfamily. As to quaternary structure, part of the 50S ribosomal subunit; part of the 5S rRNA/L5/L18/L25 subcomplex. Contacts the 5S rRNA. Binds to the 5S rRNA independently of L5 and L18.

This is one of the proteins that binds to the 5S RNA in the ribosome where it forms part of the central protuberance. This chain is Large ribosomal subunit protein bL25A, found in Symbiobacterium thermophilum (strain DSM 24528 / JCM 14929 / IAM 14863 / T).